The following is a 131-amino-acid chain: Plastocyanin (131 aa).

A signal peptide spans 1–34; that stretch reads MKFFASLSKRFAPVLSLVVLVAGTLLLSAAPASA. Positions 35 to 131 constitute a Plastocyanin-like domain; it reads ATVQIKMGTD…AGMVGTITVE (97 aa). Cu cation contacts are provided by His-73, Cys-116, His-119, and Met-124.

The protein belongs to the plastocyanin family. Cu(2+) is required as a cofactor.

It localises to the cellular thylakoid membrane. Functionally, participates in electron transfer between P700 and the cytochrome b6-f complex in photosystem I. The protein is Plastocyanin (petE) of Prochlorothrix hollandica.